We begin with the raw amino-acid sequence, 332 residues long: MKVAVLGAGAWGTALAGHLAARHDTLLWARDAALIAGLQARHENSRYLDGIALPDALRYDADLGAALAHGAADDALCVIAAPVAGLRTLCHAMRDAGCVPAHVVWVCKGFEADTHLLPHQVIAAELPEQQSNGVLSGPSFAREVGQSLPVALTVASVSAECRERTLAAFHHGAMRIYTGDDVVGVEVGGAVKNVLAIATGISDGLGLGLNARAALITRGLAEMSRLGVALGGRAETFTGLTGLGDLILTATGDLSRNRTVGLQLAAGRTLNDILGALGHVAEGVRCAQAVLALARAQSIDMPITQAVCGVLFDGIAPRDAVSGLLRRDARAE.

Tryptophan 11, arginine 30, and lysine 108 together coordinate NADPH. Positions 108, 137, and 139 each coordinate sn-glycerol 3-phosphate. NADPH is bound at residue alanine 141. Sn-glycerol 3-phosphate is bound by residues lysine 192, aspartate 245, serine 255, arginine 256, and asparagine 257. Lysine 192 functions as the Proton acceptor in the catalytic mechanism. Arginine 256 serves as a coordination point for NADPH. Residues valine 280 and glutamate 282 each contribute to the NADPH site.

The protein belongs to the NAD-dependent glycerol-3-phosphate dehydrogenase family.

The protein resides in the cytoplasm. The enzyme catalyses sn-glycerol 3-phosphate + NAD(+) = dihydroxyacetone phosphate + NADH + H(+). The catalysed reaction is sn-glycerol 3-phosphate + NADP(+) = dihydroxyacetone phosphate + NADPH + H(+). The protein operates within membrane lipid metabolism; glycerophospholipid metabolism. Functionally, catalyzes the reduction of the glycolytic intermediate dihydroxyacetone phosphate (DHAP) to sn-glycerol 3-phosphate (G3P), the key precursor for phospholipid synthesis. The protein is Glycerol-3-phosphate dehydrogenase [NAD(P)+] of Burkholderia cenocepacia (strain HI2424).